The sequence spans 573 residues: 60 kDa heat shock protein, mitochondrial (573 aa).

Residues 1-26 (MLRLPTVFRQMRPVSRVLAPHLTRAY) constitute a mitochondrion transit peptide. K31 bears the N6-succinyllysine mark. S67 and S70 each carry phosphoserine. K75 is an ATP binding site. An N6-acetyllysine modification is found at K75. K82 is subject to N6-acetyllysine; alternate. At K82 the chain carries N6-succinyllysine; alternate. K87 is subject to N6-acetyllysine. Y90 bears the Phosphotyrosine mark. Residue K91 is modified to N6-acetyllysine. 111 to 115 (DGTTT) provides a ligand contact to ATP. N6-acetyllysine; alternate is present on K125. K125 is subject to N6-succinyllysine; alternate. Position 130 is an N6-acetyllysine (K130). Residue K133 is modified to N6-acetyllysine; alternate. An N6-succinyllysine; alternate modification is found at K133. K133 carries the post-translational modification N6-malonyllysine; alternate. K156 is modified (N6-acetyllysine). 5 positions are modified to N6-acetyllysine; alternate: K191, K202, K205, K218, and K236. N6-succinyllysine; alternate occurs at positions 191, 202, 205, 218, and 236. An N6-acetyllysine modification is found at K249. Residue K250 is modified to N6-acetyllysine; alternate. N6-succinyllysine; alternate is present on K250. 2 positions are modified to N6-acetyllysine: K269 and K292. K301 carries the post-translational modification N6-succinyllysine. K314 bears the N6-acetyllysine mark. The residue at position 352 (K352) is an N6-acetyllysine; alternate. At K352 the chain carries N6-succinyllysine; alternate. N6-acetyllysine occurs at positions 359 and 389. K396 bears the N6-acetyllysine; alternate mark. Position 396 is an N6-succinyllysine; alternate (K396). A Phosphoserine modification is found at S410. Position 440 (G440) interacts with ATP. Residue K469 is modified to N6-acetyllysine. An N6-acetyllysine; alternate modification is found at K481. Position 481 is an N6-succinyllysine; alternate (K481). S488 bears the Phosphoserine mark. D520 contributes to the ATP binding site. Residue K551 forms a Glycyl lysine isopeptide (Lys-Gly) (interchain with G-Cter in SUMO2) linkage.

Belongs to the chaperonin (HSP60) family. As to quaternary structure, homoheptamer arranged in a ring structure. The functional units of these chaperonins consist of heptameric rings of the large subunit Hsp60, which function as a back-to-back double ring. Interacts with 2 heptameric Hsp10 rings to form the symmetrical football complex. Interacts with HRAS. Interacts with ATAD3A. Interacts with ETFBKMT and EEF1AKMT3. Interacts with MFHAS1. (Microbial infection) Interacts with hepatitis B virus/HBV protein X. In terms of assembly, (Microbial infection) Interacts with HTLV-1 protein p40tax.

The protein localises to the mitochondrion matrix. The enzyme catalyses ATP + H2O + a folded polypeptide = ADP + phosphate + an unfolded polypeptide.. Chaperonin implicated in mitochondrial protein import and macromolecular assembly. Together with Hsp10, facilitates the correct folding of imported proteins. May also prevent misfolding and promote the refolding and proper assembly of unfolded polypeptides generated under stress conditions in the mitochondrial matrix. The functional units of these chaperonins consist of heptameric rings of the large subunit Hsp60, which function as a back-to-back double ring. In a cyclic reaction, Hsp60 ring complexes bind one unfolded substrate protein per ring, followed by the binding of ATP and association with 2 heptameric rings of the co-chaperonin Hsp10. This leads to sequestration of the substrate protein in the inner cavity of Hsp60 where, for a certain period of time, it can fold undisturbed by other cell components. Synchronous hydrolysis of ATP in all Hsp60 subunits results in the dissociation of the chaperonin rings and the release of ADP and the folded substrate protein. This Homo sapiens (Human) protein is 60 kDa heat shock protein, mitochondrial (HSPD1).